A 277-amino-acid chain; its full sequence is Large ribosomal subunit protein uL2 (277 aa).

Residues 226–277 form a disordered region; the sequence is MNPVDHPHGGGEGRSPIGMPSPVTPWGKPTLGYKTRKPNKKSDRLIVSRRKK.

Belongs to the universal ribosomal protein uL2 family. Part of the 50S ribosomal subunit. Forms a bridge to the 30S subunit in the 70S ribosome.

In terms of biological role, one of the primary rRNA binding proteins. Required for association of the 30S and 50S subunits to form the 70S ribosome, for tRNA binding and peptide bond formation. It has been suggested to have peptidyltransferase activity; this is somewhat controversial. Makes several contacts with the 16S rRNA in the 70S ribosome. In Symbiobacterium thermophilum (strain DSM 24528 / JCM 14929 / IAM 14863 / T), this protein is Large ribosomal subunit protein uL2.